The following is a 1020-amino-acid chain: Carbamoyl phosphate synthase arginine-specific large chain (1020 aa).

The interval 1 to 401 is carboxyphosphate synthetic domain; sequence MPKNNAIHSI…ATLKAIASLE (401 aa). ATP-binding residues include Arg129, Arg169, Gly175, Gly176, Gln208, Ile210, Glu215, Gly241, Ile242, His243, Gln284, and Glu298. The ATP-grasp 1 domain occupies 133-327; it reads KTLMKRLHQP…IAKIAADIAI (195 aa). 3 residues coordinate Mg(2+): Gln284, Glu298, and Asn300. 3 residues coordinate Mn(2+): Gln284, Glu298, and Asn300. Oligomerization domain regions lie at residues 402–542 and 402–544; these read IDPK…FGQT and IDPK…QTNE. Carbamoyl phosphate synthetic domain regions lie at residues 543-927 and 544-927; these read NESH…ADSY and ESHP…ADSY. Positions 669-858 constitute an ATP-grasp 2 domain; sequence ADCLRLLKIA…LAQLATRLIL (190 aa). ATP is bound by residues Arg705, Gln744, Leu746, Glu750, Gly775, Val776, His777, Ser778, and Gln818. Residues Gln818 and Asn831 each contribute to the Mg(2+) site. Mn(2+) is bound by residues Gln818 and Asn831. The MGS-like domain maps to 927–1020; it reads YHLETWQTVD…LAVTPTPATI (94 aa). Positions 928–1020 are allosteric domain; that stretch reads HLETWQTVDG…LAVTPTPATI (93 aa).

It belongs to the CarB family. Composed of two chains; the small (or glutamine) chain promotes the hydrolysis of glutamine to ammonia, which is used by the large (or ammonia) chain to synthesize carbamoyl phosphate. Tetramer of heterodimers (alpha,beta)4. The cofactor is Mg(2+). Mn(2+) serves as cofactor.

It catalyses the reaction hydrogencarbonate + L-glutamine + 2 ATP + H2O = carbamoyl phosphate + L-glutamate + 2 ADP + phosphate + 2 H(+). The enzyme catalyses hydrogencarbonate + NH4(+) + 2 ATP = carbamoyl phosphate + 2 ADP + phosphate + 2 H(+). It functions in the pathway amino-acid biosynthesis; L-arginine biosynthesis; carbamoyl phosphate from bicarbonate: step 1/1. In terms of biological role, large subunit of the glutamine-dependent carbamoyl phosphate synthetase (CPSase). CPSase catalyzes the formation of carbamoyl phosphate from the ammonia moiety of glutamine, carbonate, and phosphate donated by ATP, constituting the first step of the biosynthetic pathway leading to arginine and/or urea. The large subunit (synthetase) binds the substrates ammonia (free or transferred from glutamine from the small subunit), hydrogencarbonate and ATP and carries out an ATP-coupled ligase reaction, activating hydrogencarbonate by forming carboxy phosphate which reacts with ammonia to form carbamoyl phosphate. This chain is Carbamoyl phosphate synthase arginine-specific large chain, found in Lactiplantibacillus plantarum (strain ATCC BAA-793 / NCIMB 8826 / WCFS1) (Lactobacillus plantarum).